The primary structure comprises 440 residues: Tuliposide B-converting enzyme 1, amyloplastic (440 aa).

The N-terminal 58 residues, 1 to 58, are a transit peptide targeting the amyloplast; that stretch reads MSIVSFCSSLPAGPHGFKHGRGTRDMVHMPCIVRRTARSPAQACRLLRWNKYHCAAVP. Ser232 functions as the Acyl-ester intermediate in the catalytic mechanism. Active-site charge relay system residues include Asp325 and His357.

It belongs to the AB hydrolase superfamily. Homodimer. Post-translationally, not glycosylated. In terms of tissue distribution, expressed in the pollen grains.

The protein resides in the plastid. Its subcellular location is the amyloplast. The catalysed reaction is 6-tuliposide B = tulipalin B + D-glucose. Its activity is regulated as follows. Inhibited by Ag(+), Cu(2+), Fe(2+), Hg(2+), V(3+) and phenylmethylsulfonyl fluoride (PMSF). Functionally, lactone-forming carboxylesterase, specifically catalyzing intramolecular transesterification, but not hydrolysis. Involved in the biosynthesis of tulipalins, defensive chemicals that show antimicrobial activities against a broad range of strains of bacteria and fungi. Substrates are 6-tuliposide B &gt; 6-tuliposide A. The polypeptide is Tuliposide B-converting enzyme 1, amyloplastic (Tulipa gesneriana (Garden tulip)).